Here is a 508-residue protein sequence, read N- to C-terminus: Photosystem II CP47 reaction center protein (508 aa).

A run of 6 helical transmembrane segments spans residues 21–36, 101–115, 140–156, 203–218, 237–252, and 457–472; these read SVHI…WAGS, IVFS…IWHW, GIHL…FGAF, IAAG…FHLS, VLSS…AFVV, and SFAL…HGAR.

This sequence belongs to the PsbB/PsbC family. PsbB subfamily. In terms of assembly, PSII is composed of 1 copy each of membrane proteins PsbA, PsbB, PsbC, PsbD, PsbE, PsbF, PsbH, PsbI, PsbJ, PsbK, PsbL, PsbM, PsbT, PsbX, PsbY, PsbZ, Psb30/Ycf12, at least 3 peripheral proteins of the oxygen-evolving complex and a large number of cofactors. It forms dimeric complexes. Binds multiple chlorophylls. PSII binds additional chlorophylls, carotenoids and specific lipids. is required as a cofactor.

Its subcellular location is the plastid. It localises to the chloroplast thylakoid membrane. In terms of biological role, one of the components of the core complex of photosystem II (PSII). It binds chlorophyll and helps catalyze the primary light-induced photochemical processes of PSII. PSII is a light-driven water:plastoquinone oxidoreductase, using light energy to abstract electrons from H(2)O, generating O(2) and a proton gradient subsequently used for ATP formation. This Arabis hirsuta (Hairy rock-cress) protein is Photosystem II CP47 reaction center protein.